Consider the following 217-residue polypeptide: Uracil-DNA glycosylase (217 aa).

Residue aspartate 62 is the Proton acceptor of the active site.

Belongs to the uracil-DNA glycosylase (UDG) superfamily. UNG family.

The protein localises to the cytoplasm. It carries out the reaction Hydrolyzes single-stranded DNA or mismatched double-stranded DNA and polynucleotides, releasing free uracil.. In terms of biological role, excises uracil residues from the DNA which can arise as a result of misincorporation of dUMP residues by DNA polymerase or due to deamination of cytosine. The chain is Uracil-DNA glycosylase from Streptococcus pyogenes serotype M1.